The primary structure comprises 615 residues: MKKSTRLLWLLSIIVLVAAVSKAVAEVDNDDDDDNTSLEGMTTAKRETLEVEDHTSLEGMVKREALEVKPPKAGKGKGKGKGRGTVAAGPEMNWPGQWELFMKNSGVSAMHAILMPLINKVQFYDATIWRISQIKLPPGVPCHVFDAKKNKVDCWAHSVLVDINTGDIKPLALTTDTWCSSGGLTVNGTLVSTGGFQGGANTARYLSTCENCVWIEYPKALAARRWYSTQATLPDGTFIVVGGRDALNYEYILPEGQNNKKLYDSQLLRQTDDPEENNLYPFVWLNTDGNLFIFANNRSILLSPKTNKVLKEFPQLPGGARNYPGSASSALLPIRLYVQNPAIIPADVLVCGGAKQDAYFRAERLKIYDWALKDCARLNINSAKPVWKTETMPTSRVMSDTVILPNGEILIINGAKRGSSGWHLAKEPNFAPLLYKPNKPLGQRFKELAPSTIPRVYHSIAIALPDGKVLVGGSNTNNGYQFNVEYPTELRIEKFSPPYLDPALANMRPRIVNTATPKQIKYGQMFDVKIELKQQNVAKENVMVTMLAPSFTTHSVSMNMRLLMLGINNVKNVGGDNHQIQAVAPPSGKLAPPGYYLLFAVYNGVPSVGEWIQIV.

The N-terminal stretch at 1–25 is a signal peptide; it reads MKKSTRLLWLLSIIVLVAAVSKAVA. An N-linked (GlcNAc...) asparagine glycan is attached at N35. The disordered stretch occupies residues 70-89; the sequence is PPKAGKGKGKGKGRGTVAAG. The span at 72–82 shows a compositional bias: basic residues; sequence KAGKGKGKGKG. Residues N187 and N297 are each glycosylated (N-linked (GlcNAc...) asparagine).

The protein localises to the secreted. The catalysed reaction is an aldehyde + O2 + H2O = a carboxylate + H2O2 + H(+). Catalyzes the oxidation of aldehydes to the corresponding carboxylate by coupling the reaction to the reduction of dioxygen to hydrogen peroxide. Substrates include glyoxal and other aldehydes. May be regulated by the transcription factor MYB80 during anther development and play a role in tapetum and pollen development. This chain is Aldehyde oxidase GLOX1, found in Arabidopsis thaliana (Mouse-ear cress).